The sequence spans 609 residues: UvrABC system protein C (609 aa).

The 79-residue stretch at 16-94 folds into the GIY-YIG domain; the sequence is HLPGVYRHLD…IKSLRPRYNI (79 aa). Residues 203–238 enclose the UVR domain; it reads REVMDEIEARMLQASTELRFEEAAVLRDQMGSLSKV.

This sequence belongs to the UvrC family. Interacts with UvrB in an incision complex.

The protein localises to the cytoplasm. In terms of biological role, the UvrABC repair system catalyzes the recognition and processing of DNA lesions. UvrC both incises the 5' and 3' sides of the lesion. The N-terminal half is responsible for the 3' incision and the C-terminal half is responsible for the 5' incision. The protein is UvrABC system protein C of Bordetella pertussis (strain Tohama I / ATCC BAA-589 / NCTC 13251).